Consider the following 313-residue polypeptide: MAEQQKVLGMPPFVADFLMGGVSAAVSKTAAAPIERIKLLVQNQDEMIRAGRLDRRYNGIIDCFKRTTADEGVMALWRGNTANVIRYFPTQALNFAFRDKFKKMFGYKKDVDGYWKWMAGNLASGGAAGATSLLFVYSLDYARTRLANDAKSAKKGGERQFNGLVDVYRKTIASDGIAGLYRGFGPSVAGIVVYRGLYFGLYDSIKPVLLVGDLKNNFLASFALGWCVTTAAGIASYPLDTIRRRMMMTSGEAVKYKSSFDAASQIVAKEGVKSLFKGAGANILRGVAGAGVLSIYDQLQVLLFGKAFKGGSG.

3 Solcar repeats span residues 11-104 (PPFV…FKKM), 116-208 (KWMA…IKPV), and 216-302 (NNFL…LQVL). The next 5 membrane-spanning stretches (helical) occupy residues 13–40 (FVAD…IKLL), 81–105 (TANV…KKMF), 114–134 (YWKW…TSLL), 184–205 (FGPS…YDSI), and 219–239 (LASF…SYPL). ADP is bound by residues Arg86 and Arg98. Arg243 contacts ADP. Residues 243–248 (RRRMMM) form an important for transport activity region. The short motif at 243-248 (RRRMMM) is the Nucleotide carrier signature motif element. Residues 279–299 (AGANILRGVAGAGVLSIYDQL) form a helical membrane-spanning segment.

Belongs to the mitochondrial carrier (TC 2.A.29) family. Monomer.

The protein resides in the mitochondrion inner membrane. The catalysed reaction is ADP(in) + ATP(out) = ADP(out) + ATP(in). With respect to regulation, the matrix-open state (m-state) is inhibited by the membrane-permeable bongkrekic acid (BKA). The cytoplasmic-open state (c-state) is inhibited by the membrane-impermeable toxic inhibitor carboxyatractyloside (CATR). ADP:ATP antiporter that mediates import of ADP into the mitochondrial matrix for ATP synthesis, and export of ATP out to fuel the cell. Cycles between the cytoplasmic-open state (c-state) and the matrix-open state (m-state): operates by the alternating access mechanism with a single substrate-binding site intermittently exposed to either the cytosolic (c-state) or matrix (m-state) side of the inner mitochondrial membrane. This Neurospora crassa (strain ATCC 24698 / 74-OR23-1A / CBS 708.71 / DSM 1257 / FGSC 987) protein is ADP,ATP carrier protein (aac).